The sequence spans 282 residues: U1 small nuclear ribonucleoprotein A (282 aa).

2 consecutive RRM domains span residues 10-89 (NTIY…YSKT) and 208-282 (HILF…FAKK).

Belongs to the RRM U1 A/B'' family. In terms of assembly, U1 snRNP is composed of the 7 core Sm proteins snrpb, snrpd1, snrpd2, snrpd3, snrpe, snrpf and snrpg that assemble in a heptameric protein ring on the Sm site of the small nuclear RNA to form the core snRNP, and at least three U1 snRNP-specific proteins snrnp70/U1-70K, snrpa/U1-A and snrpc/U1-C.

Its subcellular location is the nucleus. Functionally, component of the spliceosomal U1 snRNP, which is essential for recognition of the pre-mRNA 5' splice-site and the subsequent assembly of the spliceosome. U1 snRNP is the first snRNP to interact with pre-mRNA. This interaction is required for the subsequent binding of U2 snRNP and the U4/U6/U5 tri-snRNP. Snrpa binds stem loop II of U1 snRNA. The sequence is that of U1 small nuclear ribonucleoprotein A (snrpa) from Xenopus laevis (African clawed frog).